We begin with the raw amino-acid sequence, 116 residues long: Nucleoid-associated protein P9215_00191 (116 aa).

Belongs to the YbaB/EbfC family. As to quaternary structure, homodimer.

The protein resides in the cytoplasm. The protein localises to the nucleoid. Binds to DNA and alters its conformation. May be involved in regulation of gene expression, nucleoid organization and DNA protection. This is Nucleoid-associated protein P9215_00191 from Prochlorococcus marinus (strain MIT 9215).